A 296-amino-acid polypeptide reads, in one-letter code: Phosphatidylglycerol--prolipoprotein diacylglyceryl transferase (296 aa).

3 helical membrane-spanning segments follow: residues 17-37, 59-79, and 97-117; these read LAVR…IVVG, MMFY…VLFY, and GGMS…LFAW. Arg142 serves as a coordination point for a 1,2-diacyl-sn-glycero-3-phospho-(1'-sn-glycerol). Transmembrane regions (helical) follow at residues 230–250 and 265–285; these read MGAI…TVEF and LSMG…MMIW.

It belongs to the Lgt family.

Its subcellular location is the cell inner membrane. It carries out the reaction L-cysteinyl-[prolipoprotein] + a 1,2-diacyl-sn-glycero-3-phospho-(1'-sn-glycerol) = an S-1,2-diacyl-sn-glyceryl-L-cysteinyl-[prolipoprotein] + sn-glycerol 1-phosphate + H(+). The protein operates within protein modification; lipoprotein biosynthesis (diacylglyceryl transfer). Its function is as follows. Catalyzes the transfer of the diacylglyceryl group from phosphatidylglycerol to the sulfhydryl group of the N-terminal cysteine of a prolipoprotein, the first step in the formation of mature lipoproteins. This chain is Phosphatidylglycerol--prolipoprotein diacylglyceryl transferase, found in Burkholderia pseudomallei (strain 668).